Here is a 248-residue protein sequence, read N- to C-terminus: Tetraspanin-16 (248 aa).

Topologically, residues 1-7 are cytoplasmic; sequence MSEIRTG. A helical membrane pass occupies residues 8–28; that stretch reads FLTMATIILICIGLTMTGTGL. The Extracellular segment spans residues 29-44; the sequence is YYRKTVSKCIRETDGS. A helical membrane pass occupies residues 45–65; it reads FVVIGLLLLVIPQFALYAICC. Residues 66–69 lie on the Cytoplasmic side of the membrane; sequence HSKR. The chain crosses the membrane as a helical span at residues 70-90; that stretch reads MFTIYIYAMIFVSIVLGGYSL. At 91 to 208 the chain is on the extracellular side; the sequence is KCFIYNTTFG…MSILKAIVHQ (118 aa). N-linked (GlcNAc...) asparagine glycosylation is found at Asn-96 and Asn-141. The chain crosses the membrane as a helical span at residues 209-229; that stretch reads WKYLSMFSYPALFLVCLSLAI. Topologically, residues 230-248 are cytoplasmic; the sequence is SRSIMDTFDEPDDYRGYYS.

It belongs to the tetraspanin (TM4SF) family.

The protein resides in the membrane. Its function is as follows. May be involved in the regulation of cell differentiation. In Arabidopsis thaliana (Mouse-ear cress), this protein is Tetraspanin-16 (TET16).